Reading from the N-terminus, the 122-residue chain is Fluoride-specific ion channel FluC (122 aa).

4 helical membrane-spanning segments follow: residues 4–24 (LLIA…GTAI), 34–54 (IGTM…MTLL), 66–86 (LALV…EWET), and 95–115 (FWIG…AVWF). Positions 74 and 77 each coordinate Na(+).

It belongs to the fluoride channel Fluc/FEX (TC 1.A.43) family.

The protein resides in the cell inner membrane. It carries out the reaction fluoride(in) = fluoride(out). With respect to regulation, na(+) is not transported, but it plays an essential structural role and its presence is essential for fluoride channel function. Fluoride-specific ion channel. Important for reducing fluoride concentration in the cell, thus reducing its toxicity. The sequence is that of Fluoride-specific ion channel FluC from Solibacter usitatus (strain Ellin6076).